The following is a 323-amino-acid chain: Ribosomal RNA small subunit methyltransferase H (323 aa).

S-adenosyl-L-methionine contacts are provided by residues 44–46 (AGH), Asp-64, Tyr-91, Asp-112, and Gln-119.

The protein belongs to the methyltransferase superfamily. RsmH family.

The protein resides in the cytoplasm. The catalysed reaction is cytidine(1402) in 16S rRNA + S-adenosyl-L-methionine = N(4)-methylcytidine(1402) in 16S rRNA + S-adenosyl-L-homocysteine + H(+). Specifically methylates the N4 position of cytidine in position 1402 (C1402) of 16S rRNA. In Nitratidesulfovibrio vulgaris (strain ATCC 29579 / DSM 644 / CCUG 34227 / NCIMB 8303 / VKM B-1760 / Hildenborough) (Desulfovibrio vulgaris), this protein is Ribosomal RNA small subunit methyltransferase H.